The sequence spans 416 residues: MAYFLEQSDSEIFELIFEEFKRQNEHLEMIASENYTFASVMEAMGSILTNKYAEGYPNKRYYGGCEVVDKVESLAIERAKKLFNCQFANVQAHSGSQANNAVYHALLKPYDKILGMDLSCGGHLTHGAKVSLTGKHYQSFSYGVGLDGYIDYGETLKIAQSVKPQIIVCGFSAYPREIDFKKFREIADEVGALLLGDIAHVAGLVVASEHAHPFPHCHVVSSTTHKTLRGPRGGLILTNDEEIAAKIDKAIFPGTQGGPLMHAIAAKAVGFKENLKPEFKTYAKLVKSNMQVLAKVLKEKNHKLVSDGTSNHLLLMDFLNKPYSGKDADIALGNAGITVNKNTIPGETRSPFVTSGIRIGSAALSARGMGTKEFEIIGNKISDILNDINNVSLQLHVKEELKAMASQFPVYHQPIF.

Residues leucine 118 and 122–124 (GHL) each bind (6S)-5,6,7,8-tetrahydrofolate. Lysine 226 is subject to N6-(pyridoxal phosphate)lysine. (6S)-5,6,7,8-tetrahydrofolate-binding positions include glutamate 242 and 350–352 (SPF).

Belongs to the SHMT family. As to quaternary structure, homodimer. Pyridoxal 5'-phosphate serves as cofactor.

The protein resides in the cytoplasm. The enzyme catalyses (6R)-5,10-methylene-5,6,7,8-tetrahydrofolate + glycine + H2O = (6S)-5,6,7,8-tetrahydrofolate + L-serine. It functions in the pathway one-carbon metabolism; tetrahydrofolate interconversion. It participates in amino-acid biosynthesis; glycine biosynthesis; glycine from L-serine: step 1/1. Functionally, catalyzes the reversible interconversion of serine and glycine with tetrahydrofolate (THF) serving as the one-carbon carrier. This reaction serves as the major source of one-carbon groups required for the biosynthesis of purines, thymidylate, methionine, and other important biomolecules. Also exhibits THF-independent aldolase activity toward beta-hydroxyamino acids, producing glycine and aldehydes, via a retro-aldol mechanism. This is Serine hydroxymethyltransferase from Helicobacter acinonychis (strain Sheeba).